The following is a 339-amino-acid chain: Methionine import ATP-binding protein MetN 1 (339 aa).

An ABC transporter domain is found at 2 to 241; sequence ISFNNVSKVY…PKTKTTQNFV (240 aa). Residue 38 to 45 coordinates ATP; it reads GFSGAGKS.

Belongs to the ABC transporter superfamily. Methionine importer (TC 3.A.1.24) family. In terms of assembly, the complex is composed of two ATP-binding proteins (MetN), two transmembrane proteins (MetI) and a solute-binding protein (MetQ).

The protein localises to the cell membrane. It catalyses the reaction L-methionine(out) + ATP + H2O = L-methionine(in) + ADP + phosphate + H(+). The enzyme catalyses D-methionine(out) + ATP + H2O = D-methionine(in) + ADP + phosphate + H(+). In terms of biological role, part of the ABC transporter complex MetNIQ involved in methionine import. Responsible for energy coupling to the transport system. The polypeptide is Methionine import ATP-binding protein MetN 1 (Bacillus thuringiensis subsp. konkukian (strain 97-27)).